The sequence spans 314 residues: Transmembrane protein 178B (314 aa).

The signal sequence occupies residues 1–24 (MRLLAGAGLCLALAALALLAVALS). The interval 32–83 (DARRHRDRCRKPGGKRNDPGYMYTPGQHLPLRGEPPSSRIRSPRGGEPGGVR) is disordered. The segment covering 36-45 (HRDRCRKPGG) has biased composition (basic residues). Transmembrane regions (helical) follow at residues 194-214 (AGFI…GVLG), 228-248 (LLFL…VAGI), and 274-294 (MFCA…CTLA).

The protein belongs to the TMEM178 family.

The protein resides in the membrane. The polypeptide is Transmembrane protein 178B (tmem178b) (Xenopus tropicalis (Western clawed frog)).